Consider the following 118-residue polypeptide: D-dopachrome decarboxylase (118 aa).

P2 is modified (N-acetylproline). Residue K33 is modified to N6-acetyllysine. S90 bears the Phosphoserine mark.

Belongs to the MIF family. Homotrimer.

Its subcellular location is the cytoplasm. The enzyme catalyses D-dopachrome + H(+) = 5,6-dihydroxyindole + CO2. Tautomerization of D-dopachrome with decarboxylation to give 5,6-dihydroxyindole (DHI). The chain is D-dopachrome decarboxylase (Ddt) from Mus musculus (Mouse).